The sequence spans 306 residues: Pyridoxal 5'-phosphate synthase subunit PdxS (306 aa).

Aspartate 36 is a binding site for D-ribose 5-phosphate. The active-site Schiff-base intermediate with D-ribose 5-phosphate is lysine 93. Glycine 165 contributes to the D-ribose 5-phosphate binding site. Residue arginine 177 participates in D-glyceraldehyde 3-phosphate binding. D-ribose 5-phosphate is bound by residues glycine 226 and 247-248 (GS).

Belongs to the PdxS/SNZ family. In the presence of PdxT, forms a dodecamer of heterodimers.

It catalyses the reaction aldehydo-D-ribose 5-phosphate + D-glyceraldehyde 3-phosphate + L-glutamine = pyridoxal 5'-phosphate + L-glutamate + phosphate + 3 H2O + H(+). The protein operates within cofactor biosynthesis; pyridoxal 5'-phosphate biosynthesis. Functionally, catalyzes the formation of pyridoxal 5'-phosphate from ribose 5-phosphate (RBP), glyceraldehyde 3-phosphate (G3P) and ammonia. The ammonia is provided by the PdxT subunit. Can also use ribulose 5-phosphate and dihydroxyacetone phosphate as substrates, resulting from enzyme-catalyzed isomerization of RBP and G3P, respectively. The protein is Pyridoxal 5'-phosphate synthase subunit PdxS of Nocardia farcinica (strain IFM 10152).